The sequence spans 317 residues: Transaldolase (317 aa).

Residue lysine 126 is the Schiff-base intermediate with substrate of the active site.

It belongs to the transaldolase family. Type 1 subfamily. Homodimer.

Its subcellular location is the cytoplasm. The enzyme catalyses D-sedoheptulose 7-phosphate + D-glyceraldehyde 3-phosphate = D-erythrose 4-phosphate + beta-D-fructose 6-phosphate. Its pathway is carbohydrate degradation; pentose phosphate pathway; D-glyceraldehyde 3-phosphate and beta-D-fructose 6-phosphate from D-ribose 5-phosphate and D-xylulose 5-phosphate (non-oxidative stage): step 2/3. In terms of biological role, transaldolase is important for the balance of metabolites in the pentose-phosphate pathway. This is Transaldolase from Burkholderia orbicola (strain MC0-3).